The following is a 901-amino-acid chain: HTH-type transcriptional regulator MalT (901 aa).

39 to 46 (SPAGYGKT) contacts ATP. The HTH luxR-type domain occupies 829–894 (ELIRTSPLTQ…DAVQHAQQLL (66 aa)). The segment at residues 853-872 (NEQIAGELEVAATTIKTHIR) is a DNA-binding region (H-T-H motif).

This sequence belongs to the MalT family. Monomer in solution. Oligomerizes to an active state in the presence of the positive effectors ATP and maltotriose.

Its activity is regulated as follows. Activated by ATP and maltotriose, which are both required for DNA binding. Positively regulates the transcription of the maltose regulon whose gene products are responsible for uptake and catabolism of malto-oligosaccharides. Specifically binds to the promoter region of its target genes, recognizing a short DNA motif called the MalT box. This Escherichia fergusonii (strain ATCC 35469 / DSM 13698 / CCUG 18766 / IAM 14443 / JCM 21226 / LMG 7866 / NBRC 102419 / NCTC 12128 / CDC 0568-73) protein is HTH-type transcriptional regulator MalT.